Here is a 178-residue protein sequence, read N- to C-terminus: ATP-dependent protease subunit HslV (178 aa).

Thr7 is a catalytic residue. Na(+) is bound by residues Gly162, Cys165, and Thr168.

It belongs to the peptidase T1B family. HslV subfamily. In terms of assembly, a double ring-shaped homohexamer of HslV is capped on each side by a ring-shaped HslU homohexamer. The assembly of the HslU/HslV complex is dependent on binding of ATP.

The protein resides in the cytoplasm. The enzyme catalyses ATP-dependent cleavage of peptide bonds with broad specificity.. Its activity is regulated as follows. Allosterically activated by HslU binding. In terms of biological role, protease subunit of a proteasome-like degradation complex believed to be a general protein degrading machinery. The protein is ATP-dependent protease subunit HslV of Burkholderia mallei (strain ATCC 23344).